The chain runs to 382 residues: Heme A synthase (382 aa).

A run of 8 helical transmembrane segments spans residues 25–45 (GAVRAWLYLLAVLVVAMVAVG), 112–132 (LLGRIVGLVFFLPFAWFWARG), 138–158 (LLLGLLGLGLLGGLQGAIGWI), 176–196 (LALHLTTASLILAGLVWLAAG), 211–231 (VVAGLLPALVLVQIWLGGLVA), 270–290 (LALVQFNHRLFAYLVVVVAIA), 303–323 (AAAGRAMGLAALATAQMGLGI), and 327–347 (LLHVPLWAGLAHQVFAMAVLI). H277 contacts heme. Heme is bound at residue H338.

The protein belongs to the COX15/CtaA family. Type 2 subfamily. Interacts with CtaB. The cofactor is heme b.

It localises to the cell membrane. The enzyme catalyses Fe(II)-heme o + 2 A + H2O = Fe(II)-heme a + 2 AH2. Its pathway is porphyrin-containing compound metabolism; heme A biosynthesis; heme A from heme O: step 1/1. Its function is as follows. Catalyzes the conversion of heme O to heme A by two successive hydroxylations of the methyl group at C8. The first hydroxylation forms heme I, the second hydroxylation results in an unstable dihydroxymethyl group, which spontaneously dehydrates, resulting in the formyl group of heme A. The protein is Heme A synthase of Methylorubrum extorquens (strain PA1) (Methylobacterium extorquens).